Here is a 1340-residue protein sequence, read N- to C-terminus: DNA-directed RNA polymerase subunit beta (1340 aa).

It belongs to the RNA polymerase beta chain family. In terms of assembly, the RNAP catalytic core consists of 2 alpha, 1 beta, 1 beta' and 1 omega subunit. When a sigma factor is associated with the core the holoenzyme is formed, which can initiate transcription.

The catalysed reaction is RNA(n) + a ribonucleoside 5'-triphosphate = RNA(n+1) + diphosphate. In terms of biological role, DNA-dependent RNA polymerase catalyzes the transcription of DNA into RNA using the four ribonucleoside triphosphates as substrates. This is DNA-directed RNA polymerase subunit beta from Baumannia cicadellinicola subsp. Homalodisca coagulata.